The sequence spans 379 residues: Homoserine O-succinyltransferase (379 aa).

Residues 51–360 (NAVLICHALS…DAPQGHDAFL (310 aa)) form the AB hydrolase-1 domain. The Nucleophile role is filled by S157. R227 lines the substrate pocket. Active-site residues include D323 and H356. A substrate-binding site is contributed by D357.

The protein belongs to the AB hydrolase superfamily. MetX family. As to quaternary structure, homodimer.

The protein resides in the cytoplasm. It catalyses the reaction L-homoserine + succinyl-CoA = O-succinyl-L-homoserine + CoA. Its pathway is amino-acid biosynthesis; L-methionine biosynthesis via de novo pathway; O-succinyl-L-homoserine from L-homoserine: step 1/1. In terms of biological role, transfers a succinyl group from succinyl-CoA to L-homoserine, forming succinyl-L-homoserine. In Pseudomonas aeruginosa (strain LESB58), this protein is Homoserine O-succinyltransferase.